The chain runs to 313 residues: Protein-methionine-sulfoxide reductase catalytic subunit MsrP (313 aa).

The tat-type signal signal peptide spans M1–A44. Mo-molybdopterin contacts are provided by residues N76, Y79–E80, C134, T169, N217, R222, and G233–K235.

Belongs to the MsrP family. As to quaternary structure, heterodimer of a catalytic subunit (MsrP) and a heme-binding subunit (MsrQ). Mo-molybdopterin serves as cofactor. Post-translationally, predicted to be exported by the Tat system. The position of the signal peptide cleavage has not been experimentally proven.

The protein localises to the periplasm. The catalysed reaction is L-methionyl-[protein] + a quinone + H2O = L-methionyl-(S)-S-oxide-[protein] + a quinol. The enzyme catalyses L-methionyl-[protein] + a quinone + H2O = L-methionyl-(R)-S-oxide-[protein] + a quinol. Functionally, part of the MsrPQ system that repairs oxidized periplasmic proteins containing methionine sulfoxide residues (Met-O), using respiratory chain electrons. Thus protects these proteins from oxidative-stress damage caused by reactive species of oxygen and chlorine generated by the host defense mechanisms. MsrPQ is essential for the maintenance of envelope integrity under bleach stress, rescuing a wide series of structurally unrelated periplasmic proteins from methionine oxidation. The catalytic subunit MsrP is non-stereospecific, being able to reduce both (R-) and (S-) diastereoisomers of methionine sulfoxide. The polypeptide is Protein-methionine-sulfoxide reductase catalytic subunit MsrP (Anaeromyxobacter dehalogenans (strain 2CP-1 / ATCC BAA-258)).